The primary structure comprises 453 residues: Growth/differentiation factor 9 (453 aa).

The N-terminal stretch at 1–27 (MALPNKFFLWFCCFAWLCFPISLDSLP) is a signal peptide. Positions 28 to 318 (SRGEAQIVAR…EGVRSSRHRR (291 aa)) are excised as a propeptide. Residues Asn163, Asn236, Asn255, and Asn269 are each glycosylated (N-linked (GlcNAc...) asparagine). The disordered stretch occupies residues 304-328 (GEEAAEGVRSSRHRRDQESASSELK). Residues 318 to 328 (RDQESASSELK) are compositionally biased toward basic and acidic residues. Asn337 carries N-linked (GlcNAc...) asparagine glycosylation. Intrachain disulfides connect Cys352-Cys418, Cys381-Cys450, and Cys385-Cys452.

Belongs to the TGF-beta family. Homodimer or heterodimer (Potential). But, in contrast to other members of this family, cannot be disulfide-linked. Post-translationally, phosphorylated; phosphorylation is critical for GDF9 function.

It is found in the secreted. Required for ovarian folliculogenesis. This is Growth/differentiation factor 9 (GDF9) from Ovis aries (Sheep).